Consider the following 394-residue polypeptide: Keratin, type I cuticular Ha4 (394 aa).

The head stretch occupies residues 1–56 (MSYSCCLPSLGCRTSCSSRPCVPPSCHGYTLPGACNIPANVSNCNWFCEGSFNGSE). Positions 56-367 (EKETMQFLND…SLLESEDCKL (312 aa)) constitute an IF rod domain. Positions 57-91 (KETMQFLNDRLASYLEKVRQLERDNAELEKLIQER) are coil 1A. Residues 92 to 102 (SQQQEPLLCPS) are linker 1. Residues 103 to 203 (YQSYFKTIEE…HEEEVNTLRS (101 aa)) form a coil 1B region. Positions 204–219 (QLGDRLNVEVDTAPTV) are linker 12. The tract at residues 220 to 363 (DLNQVLNETR…NTYRSLLESE (144 aa)) is coil 2. Positions 364–394 (DCKLPCNPCATTNASGNSCGPCGTSQKGCCN) are tail.

It belongs to the intermediate filament family. Expressed in the hair follicles.

The polypeptide is Keratin, type I cuticular Ha4 (KRT34) (Homo sapiens (Human)).